The chain runs to 357 residues: MSEKVLFIDRDGTLISEPLDNFQVDSFDKLEFKQDVISSLITLKKFNYKFVMVTNQDGLGSKNFPYKSFIRPHEFMIDVFLSQGIKFEEVLICPHELKSGCQCRKPNLGMVQHWLLNDMLDKQHSCVIGDRKTDMILANNMGILGIRYGTKQGNSWSDIVFKLTKKHDRHAKVVRNTKETNVSIEVWLDKQGGSLINTGLNMFNHMLDQIAVHSCIRMKIISSGDICVDDHHTVEDVGIVLGKAILKALGNKLGINRFGFALPMDDSSSYCLLDISGRPFLKFRSYFKHQYIGDMSSEMVRHFFQSLAFAMKCTLHLRSMGINDHHRLESLFKVFGKTLKQAIVVSGKNLPSSKGLL.

Residues 1-168 form a histidinol-phosphatase region; that stretch reads MSEKVLFIDR…IVFKLTKKHD (168 aa). D9 acts as the Nucleophile in catalysis. 2 residues coordinate Mg(2+): D9 and D11. D11 acts as the Proton donor in catalysis. C93, H95, C101, and C103 together coordinate Zn(2+). D130 contributes to the Mg(2+) binding site. Residues 169–357 form an imidazoleglycerol-phosphate dehydratase region; the sequence is RHAKVVRNTK…KNLPSSKGLL (189 aa).

It in the N-terminal section; belongs to the histidinol-phosphatase family. This sequence in the C-terminal section; belongs to the imidazoleglycerol-phosphate dehydratase family. The cofactor is Mg(2+). Zn(2+) is required as a cofactor.

Its subcellular location is the cytoplasm. It carries out the reaction D-erythro-1-(imidazol-4-yl)glycerol 3-phosphate = 3-(imidazol-4-yl)-2-oxopropyl phosphate + H2O. It catalyses the reaction L-histidinol phosphate + H2O = L-histidinol + phosphate. It functions in the pathway amino-acid biosynthesis; L-histidine biosynthesis; L-histidine from 5-phospho-alpha-D-ribose 1-diphosphate: step 6/9. The protein operates within amino-acid biosynthesis; L-histidine biosynthesis; L-histidine from 5-phospho-alpha-D-ribose 1-diphosphate: step 8/9. This Buchnera aphidicola subsp. Baizongia pistaciae (strain Bp) protein is Histidine biosynthesis bifunctional protein HisB.